Consider the following 104-residue polypeptide: Flagellar hook-basal body complex protein FliE (104 aa).

This sequence belongs to the FliE family.

It localises to the bacterial flagellum basal body. This chain is Flagellar hook-basal body complex protein FliE, found in Escherichia coli (strain SE11).